The chain runs to 605 residues: Granule-bound starch synthase 1, chloroplastic/amyloplastic (605 aa).

The N-terminal 72 residues, 1-72 (MAALATSQLV…GGRFPSLVVC (72 aa)), are a transit peptide targeting the chloroplast. Lys-91 contributes to the ADP-alpha-D-glucose binding site.

Belongs to the glycosyltransferase 1 family. Bacterial/plant glycogen synthase subfamily.

Its subcellular location is the plastid. It is found in the chloroplast. The protein localises to the amyloplast. It carries out the reaction an NDP-alpha-D-glucose + [(1-&gt;4)-alpha-D-glucosyl](n) = [(1-&gt;4)-alpha-D-glucosyl](n+1) + a ribonucleoside 5'-diphosphate + H(+). Its pathway is glycan biosynthesis; starch biosynthesis. Functionally, required for the synthesis of amylose in endosperm. In Zea mays (Maize), this protein is Granule-bound starch synthase 1, chloroplastic/amyloplastic (WAXY).